We begin with the raw amino-acid sequence, 704 residues long: Ion-translocating oxidoreductase complex subunit C (704 aa).

4Fe-4S ferredoxin-type domains follow at residues 368 to 397 and 407 to 436; these read MGAP…QQLY and KATA…VQYF. Cysteine 377, cysteine 380, cysteine 383, cysteine 387, cysteine 416, cysteine 419, cysteine 422, and cysteine 426 together coordinate [4Fe-4S] cluster. A disordered region spans residues 535 to 684; it reads ARAKQAAHPM…PADPRKAAVA (150 aa). Residues 556–565 are compositionally biased toward low complexity; it reads KAAVEAAIAR.

Belongs to the 4Fe4S bacterial-type ferredoxin family. RnfC subfamily. As to quaternary structure, the complex is composed of six subunits: RsxA, RsxB, RsxC, RsxD, RsxE and RsxG. The cofactor is [4Fe-4S] cluster.

The protein resides in the cell inner membrane. Its function is as follows. Part of a membrane-bound complex that couples electron transfer with translocation of ions across the membrane. Required to maintain the reduced state of SoxR. In Salmonella paratyphi C (strain RKS4594), this protein is Ion-translocating oxidoreductase complex subunit C.